Consider the following 137-residue polypeptide: Large ribosomal subunit protein uL16 (137 aa).

This sequence belongs to the universal ribosomal protein uL16 family. Part of the 50S ribosomal subunit.

Its function is as follows. Binds 23S rRNA and is also seen to make contacts with the A and possibly P site tRNAs. This is Large ribosomal subunit protein uL16 from Streptococcus thermophilus (strain CNRZ 1066).